We begin with the raw amino-acid sequence, 120 residues long: Crustacean hyperglycemic hormones 1 (120 aa).

The first 24 residues, 1–24, serve as a signal peptide directing secretion; the sequence is MIAFRAVWSALLASLLLLLLAPSA. Intrachain disulfides connect C53–C89, C69–C85, and C72–C98. Valine amide is present on V118.

Belongs to the arthropod CHH/MIH/GIH/VIH hormone family. In terms of tissue distribution, produced by the medulla terminalis X-organ in the eyestalks and transported to the sinus gland where they are stored and released.

It localises to the secreted. In terms of biological role, hormone found in the sinus gland of isopods and decapods which controls the blood sugar level. Has a secretagogue action over the amylase released from the midgut gland. May act as a stress hormone and may be involved in the control of molting and reproduction. This is Crustacean hyperglycemic hormones 1 from Penaeus japonicus (Kuruma prawn).